The chain runs to 131 residues: Monothiol glutaredoxin-S6 (131 aa).

One can recognise a Glutaredoxin domain in the interval 31 to 131; the sequence is SAFVQNAIYS…KLLGNSQSQR (101 aa). A [2Fe-2S] cluster-binding site is contributed by C51.

Belongs to the glutaredoxin family. CPYC subfamily.

Its subcellular location is the cytoplasm. May only reduce GSH-thiol disulfides, but not protein disulfides. The protein is Monothiol glutaredoxin-S6 (GRXS6) of Oryza sativa subsp. japonica (Rice).